The following is a 31-amino-acid chain: Cliotide T17 (31 aa).

Residues 1–31 (GTVPCGESCVFIPCITGIAGCSCKNKVCYLN) constitute a cross-link (cyclopeptide (Gly-Asn)). 3 cysteine pairs are disulfide-bonded: Cys5/Cys21, Cys9/Cys23, and Cys14/Cys28.

In terms of processing, contains 3 disulfide bonds. This is a cyclic peptide. Expressed in root nodules but not in seed.

Functionally, probably participates in a plant defense mechanism. This is Cliotide T17 from Clitoria ternatea (Butterfly pea).